Consider the following 308-residue polypeptide: UPF0026 protein jhp_0109 (308 aa).

Residues 18-247 (FGKSLGVDLS…VSLPKRSTAQ (230 aa)) enclose the Radical SAM core domain. Positions 33, 37, and 40 each coordinate [4Fe-4S] cluster.

The protein belongs to the UPF0026 family. It depends on [4Fe-4S] cluster as a cofactor.

The chain is UPF0026 protein jhp_0109 from Helicobacter pylori (strain J99 / ATCC 700824) (Campylobacter pylori J99).